Reading from the N-terminus, the 2513-residue chain is Probable polyketide synthase 7 (2513 aa).

A Ketosynthase family 3 (KS3) domain is found at 11-441 (EKGVAIVGIG…GSNCCLLISE (431 aa)). Catalysis depends on for beta-ketoacyl synthase activity residues Cys181, His323, and His362. The interval 632–665 (GVNPSFILGHSLGEISASYCSGMIDLDTFCYTVY) is acyl/malonyl transferase. Residue Ser642 is the For acyl/malonyl transferase activity of the active site. The segment at 922–1044 (IDHLGISNSF…SNFQLLDHGN (123 aa)) is N-terminal hotdog fold. One can recognise a PKS/mFAS DH domain in the interval 922–1206 (IDHLGISNSF…CKSLIPIKDS (285 aa)). His956 acts as the Proton acceptor; for dehydratase activity in catalysis. Residues 1061–1206 (NLSKLTKNEL…CKSLIPIKDS (146 aa)) form a C-terminal hotdog fold region. Asp1119 (proton donor; for dehydratase activity) is an active-site residue. Positions 2426–2503 (IGNKNIDELF…ISIKMILNSL (78 aa)) constitute a Carrier domain. Ser2463 carries the post-translational modification O-(pantetheine 4'-phosphoryl)serine.

Pantetheine 4'-phosphate is required as a cofactor.

Its function is as follows. Probable polyketide synthase. In Dictyostelium discoideum (Social amoeba), this protein is Probable polyketide synthase 7 (pks7).